The primary structure comprises 98 residues: Large ribosomal subunit protein uL23 (98 aa).

It belongs to the universal ribosomal protein uL23 family. As to quaternary structure, part of the 50S ribosomal subunit. Contacts protein L29, and trigger factor when it is bound to the ribosome.

Its function is as follows. One of the early assembly proteins it binds 23S rRNA. One of the proteins that surrounds the polypeptide exit tunnel on the outside of the ribosome. Forms the main docking site for trigger factor binding to the ribosome. This Streptococcus pneumoniae serotype 19F (strain G54) protein is Large ribosomal subunit protein uL23.